The following is a 299-amino-acid chain: Coenzyme PQQ synthesis protein B (299 aa).

It belongs to the PqqB family.

It functions in the pathway cofactor biosynthesis; pyrroloquinoline quinone biosynthesis. Functionally, may be involved in the transport of PQQ or its precursor to the periplasm. In Methylobacterium radiotolerans (strain ATCC 27329 / DSM 1819 / JCM 2831 / NBRC 15690 / NCIMB 10815 / 0-1), this protein is Coenzyme PQQ synthesis protein B.